A 236-amino-acid polypeptide reads, in one-letter code: Sorulation-regulated protein 2 (236 aa).

The signal sequence occupies residues 1-20; that stretch reads MLGLYLSSLFFAFFMAQVFA. 4 N-linked (GlcNAc...) asparagine glycosylation sites follow: Asn155, Asn160, Asn203, and Asn212. Asn212 carries GPI-anchor amidated asparagine lipidation. Residues 213–236 constitute a propeptide, removed in mature form; sequence SSSSLMPSMGILSFLFGLYLLLHP.

The GPI-anchor is attached to the protein in the endoplasmic reticulum and serves to target the protein to the cell surface. There, the glucosamine-inositol phospholipid moiety is cleaved off and the GPI-modified mannoprotein is covalently attached via its lipidless GPI glycan remnant to the 1,6-beta-glucan of the outer cell wall layer. In terms of processing, N-glycosylated.

Its subcellular location is the spore wall. The protein localises to the secreted. The protein resides in the cell wall. It is found in the membrane. The polypeptide is Sorulation-regulated protein 2 (Saccharomyces cerevisiae (strain ATCC 204508 / S288c) (Baker's yeast)).